The sequence spans 134 residues: UPF0216 protein AF_0460 (134 aa).

It belongs to the UPF0216 family.

The protein is UPF0216 protein AF_0460 of Archaeoglobus fulgidus (strain ATCC 49558 / DSM 4304 / JCM 9628 / NBRC 100126 / VC-16).